A 3096-amino-acid chain; its full sequence is Unconventional myosin-XVB (3096 aa).

Disordered stretches follow at residues 1 to 330 (MGRN…GPED), 389 to 489 (RPPE…GWGR), 508 to 540 (GGMP…ETPD), and 553 to 649 (AGRA…GPRL). The span at 19–33 (ASGEQESGSASADGA) shows a compositional bias: low complexity. Basic and acidic residues predominate over residues 34–50 (PSRERRSDRGQADRAKP). The span at 124-143 (RRRRKRKDKGPSARRGRRTP) shows a compositional bias: basic residues. Composition is skewed to basic and acidic residues over residues 212–222 (DWPHADTRGRE) and 261–288 (TFED…RGAE). A compositionally biased stretch (low complexity) spans 307 to 330 (AVGQVPAAAGEGEAGAAAGAGPED). Residues 406–416 (WGRRKPDEGRG) are compositionally biased toward basic and acidic residues. Residues 417–426 (HGRGSKGRGR) are compositionally biased toward basic residues. Residues 427–489 (GKADEGRGHE…HQRGYEGWGR (63 aa)) show a composition bias toward basic and acidic residues. Residues 720 to 1394 (EDMEDLARLR…GWQRLEELRD (675 aa)) enclose the Myosin motor domain. An ATP-binding site is contributed by 818–825 (GHSGSGKT). Positions 1273–1295 (LEDLIARLGRSHVYFIQCLTPNP) are actin-binding. The 30-residue stretch at 1414–1443 (RQRVLPRMQARMRGFQARKRYLRRRAALGQ) folds into the IQ domain. Positions 1551-1702 (RPGQPLAKPL…PTQLEWLAGW (152 aa)) constitute a MyTH4 1 domain. Disordered stretches follow at residues 1802–1833 (PGIQ…VQRS), 1963–2026 (MQQR…PKSF), and 2040–2262 (QITV…LPED). Pro residues predominate over residues 1808–1820 (SLPPGPPPGPAPT). Low complexity predominate over residues 1963 to 1980 (MQQRQQQARASEAASQAS). Residues 2059–2076 (AQEEEEEEEEEEEQEEQE) are compositionally biased toward acidic residues. Residues 2102 to 2116 (APKEAEAEPAKETAA) are compositionally biased toward basic and acidic residues. Residues 2159 to 2170 (GPVPVPVQPSRP) show a composition bias toward pro residues. Over residues 2176 to 2185 (RKIDPKDEAL) the composition is skewed to basic and acidic residues. 2 stretches are compositionally biased toward pro residues: residues 2199 to 2217 (MLSP…PRPK) and 2247 to 2261 (HTPP…PLPE). The SH3 domain maps to 2481–2542 (KDSGYVIALR…PADIVQPAAA (62 aa)). The disordered stretch occupies residues 2548-2567 (SKEQRSGWHKGQLSNGEPGL). A MyTH4 2 domain is found at 2643–2789 (YTKAPIQESL…PPPGEMKAFL (147 aa)). The 302-residue stretch at 2795 to 3096 (RLLLIHLPGG…ASCTEWPSIN (302 aa)) folds into the FERM domain.

Belongs to the TRAFAC class myosin-kinesin ATPase superfamily. Myosin family. Detected in brain, stomach and kidney.

The protein localises to the cytoplasm. This Homo sapiens (Human) protein is Unconventional myosin-XVB.